The primary structure comprises 148 residues: Histone H2B.1 (148 aa).

Residues 1 to 35 show a composition bias toward basic and acidic residues; that stretch reads MAPRAEKKPAEKKTAAERPVEENKAAEKAPAEKKP. The disordered stretch occupies residues 1-56; it reads MAPRAEKKPAEKKTAAERPVEENKAAEKAPAEKKPKAGKKLPPKEAGDKKKKRSKK. A2 carries the n,N,N-trimethylalanine; alternate modification. At A2 the chain carries N,N-dimethylalanine; alternate. An N-methylalanine; alternate modification is found at A2. Residue K7 is modified to N6-acetyllysine; partial. An N6-acetyllysine modification is found at K12. At K13 the chain carries N6,N6-dimethyllysine. 3 positions are modified to N6-acetyllysine: K28, K33, and K39. Residue K40 is modified to N6-acetyllysine; partial. K144 participates in a covalent cross-link: Glycyl lysine isopeptide (Lys-Gly) (interchain with G-Cter in ubiquitin).

It belongs to the histone H2B family. In terms of assembly, the nucleosome is a histone octamer containing two molecules each of H2A, H2B, H3 and H4 assembled in one H3-H4 heterotetramer and two H2A-H2B heterodimers. The octamer wraps approximately 147 bp of DNA. Interacts with AHL27. Post-translationally, can be acetylated to form H2BK6ac, H2BK33ac and H2BK34ac. Mono-, di- or trimethylated at the N-terminus to form H2BA1me1/2/3. H2BA1me2 may be acetylated to form H2BA1me2K6ac. In terms of processing, monoubiquitinated by BRE1 to form H2BK143ub1 and deubiquitinated by UBP26. Required for heterochromatic histone H3 di- and trimethylation at H3K4me. May give a specific tag for epigenetic transcriptional activation.

The protein resides in the nucleus. It localises to the chromosome. Functionally, core component of nucleosome. Nucleosomes wrap and compact DNA into chromatin, limiting DNA accessibility to the cellular machineries which require DNA as a template. Histones thereby play a central role in transcription regulation, DNA repair, DNA replication and chromosomal stability. DNA accessibility is regulated via a complex set of post-translational modifications of histones, also called histone code, and nucleosome remodeling. This is Histone H2B.1 from Arabidopsis thaliana (Mouse-ear cress).